The primary structure comprises 475 residues: 3-isopropylmalate dehydratase large subunit (475 aa).

The [4Fe-4S] cluster site is built by Cys353, Cys414, and Cys417.

Belongs to the aconitase/IPM isomerase family. LeuC type 1 subfamily. As to quaternary structure, heterodimer of LeuC and LeuD. Requires [4Fe-4S] cluster as cofactor.

The enzyme catalyses (2R,3S)-3-isopropylmalate = (2S)-2-isopropylmalate. The protein operates within amino-acid biosynthesis; L-leucine biosynthesis; L-leucine from 3-methyl-2-oxobutanoate: step 2/4. Catalyzes the isomerization between 2-isopropylmalate and 3-isopropylmalate, via the formation of 2-isopropylmaleate. This Ectopseudomonas mendocina (strain ymp) (Pseudomonas mendocina) protein is 3-isopropylmalate dehydratase large subunit.